A 127-amino-acid polypeptide reads, in one-letter code: Evasin P467 (127 aa).

A signal peptide spans 1–21 (MALKACITVIAVVYVVQVVRG). 4 disulfide bridges follow: Cys42/Cys63, Cys59/Cys100, Cys76/Cys105, and Cys95/Cys114. Asn49 and Asn94 each carry an N-linked (GlcNAc...) asparagine glycan.

It localises to the secreted. Functionally, salivary chemokine-binding protein which binds to host chemokines CCL1, CCL2, CCL3 and CCL5. This is Evasin P467 from Rhipicephalus pulchellus (Yellow backed tick).